The following is a 501-amino-acid chain: Aerobic glycerol-3-phosphate dehydrogenase (501 aa).

5–33 (DLIVIGGGINGAGIAADAAGRGLSVLMLE) provides a ligand contact to FAD.

This sequence belongs to the FAD-dependent glycerol-3-phosphate dehydrogenase family. The cofactor is FAD.

The protein localises to the cytoplasm. It catalyses the reaction a quinone + sn-glycerol 3-phosphate = dihydroxyacetone phosphate + a quinol. The protein operates within polyol metabolism; glycerol degradation via glycerol kinase pathway; glycerone phosphate from sn-glycerol 3-phosphate (aerobic route): step 1/1. Its function is as follows. Conversion of glycerol 3-phosphate to dihydroxyacetone. Uses molecular oxygen or nitrate as electron acceptor. The chain is Aerobic glycerol-3-phosphate dehydrogenase (glpD) from Escherichia coli (strain K12).